Consider the following 484-residue polypeptide: tRNA-2-methylthio-N(6)-dimethylallyladenosine synthase (484 aa).

An MTTase N-terminal domain is found at 36 to 153 (GKLYIKTHGC…LPELIRARRE (118 aa)). Cysteine 45, cysteine 82, cysteine 116, cysteine 190, cysteine 194, and cysteine 197 together coordinate [4Fe-4S] cluster. The 240-residue stretch at 176 to 415 (RAEGPSAFVS…HISAHAASIS (240 aa)) folds into the Radical SAM core domain. Positions 416-479 (QSMVGSVQRV…SNSLRGRIQL (64 aa)) constitute a TRAM domain. The disordered stretch occupies residues 428–450 (EGPSRRDPNELTGKSENMRPVNF).

It belongs to the methylthiotransferase family. MiaB subfamily. As to quaternary structure, monomer. Requires [4Fe-4S] cluster as cofactor.

It is found in the cytoplasm. The enzyme catalyses N(6)-dimethylallyladenosine(37) in tRNA + (sulfur carrier)-SH + AH2 + 2 S-adenosyl-L-methionine = 2-methylsulfanyl-N(6)-dimethylallyladenosine(37) in tRNA + (sulfur carrier)-H + 5'-deoxyadenosine + L-methionine + A + S-adenosyl-L-homocysteine + 2 H(+). Its function is as follows. Catalyzes the methylthiolation of N6-(dimethylallyl)adenosine (i(6)A), leading to the formation of 2-methylthio-N6-(dimethylallyl)adenosine (ms(2)i(6)A) at position 37 in tRNAs that read codons beginning with uridine. The sequence is that of tRNA-2-methylthio-N(6)-dimethylallyladenosine synthase from Xanthomonas oryzae pv. oryzae (strain KACC10331 / KXO85).